A 242-amino-acid chain; its full sequence is Leucyl/phenylalanyl-tRNA--protein transferase (242 aa).

It belongs to the L/F-transferase family.

The protein resides in the cytoplasm. It carries out the reaction N-terminal L-lysyl-[protein] + L-leucyl-tRNA(Leu) = N-terminal L-leucyl-L-lysyl-[protein] + tRNA(Leu) + H(+). The enzyme catalyses N-terminal L-arginyl-[protein] + L-leucyl-tRNA(Leu) = N-terminal L-leucyl-L-arginyl-[protein] + tRNA(Leu) + H(+). The catalysed reaction is L-phenylalanyl-tRNA(Phe) + an N-terminal L-alpha-aminoacyl-[protein] = an N-terminal L-phenylalanyl-L-alpha-aminoacyl-[protein] + tRNA(Phe). Functionally, functions in the N-end rule pathway of protein degradation where it conjugates Leu, Phe and, less efficiently, Met from aminoacyl-tRNAs to the N-termini of proteins containing an N-terminal arginine or lysine. This Alcanivorax borkumensis (strain ATCC 700651 / DSM 11573 / NCIMB 13689 / SK2) protein is Leucyl/phenylalanyl-tRNA--protein transferase.